The chain runs to 264 residues: NAD kinase 1 (264 aa).

Residue Asp45 is the Proton acceptor of the active site. Residues 45–46 (DG), 122–123 (NE), Arg148, Asp150, 161–166 (TAYNKS), and Ala185 contribute to the NAD(+) site.

It belongs to the NAD kinase family. It depends on a divalent metal cation as a cofactor.

The protein localises to the cytoplasm. It catalyses the reaction NAD(+) + ATP = ADP + NADP(+) + H(+). Its function is as follows. Involved in the regulation of the intracellular balance of NAD and NADP, and is a key enzyme in the biosynthesis of NADP. Catalyzes specifically the phosphorylation on 2'-hydroxyl of the adenosine moiety of NAD to yield NADP. The sequence is that of NAD kinase 1 from Listeria monocytogenes serotype 4b (strain F2365).